We begin with the raw amino-acid sequence, 493 residues long: Glutamyl-tRNA(Gln) amidotransferase subunit A (493 aa).

Active-site charge relay system residues include lysine 78 and serine 158. Serine 182 (acyl-ester intermediate) is an active-site residue.

Belongs to the amidase family. GatA subfamily. In terms of assembly, heterotrimer of A, B and C subunits.

The enzyme catalyses L-glutamyl-tRNA(Gln) + L-glutamine + ATP + H2O = L-glutaminyl-tRNA(Gln) + L-glutamate + ADP + phosphate + H(+). Functionally, allows the formation of correctly charged Gln-tRNA(Gln) through the transamidation of misacylated Glu-tRNA(Gln) in organisms which lack glutaminyl-tRNA synthetase. The reaction takes place in the presence of glutamine and ATP through an activated gamma-phospho-Glu-tRNA(Gln). This chain is Glutamyl-tRNA(Gln) amidotransferase subunit A, found in Beijerinckia indica subsp. indica (strain ATCC 9039 / DSM 1715 / NCIMB 8712).